Here is a 331-residue protein sequence, read N- to C-terminus: Glycerol-3-phosphate dehydrogenase [NAD(P)+] (331 aa).

W13, R33, and K103 together coordinate NADPH. 3 residues coordinate sn-glycerol 3-phosphate: K103, G131, and T133. A135 is a binding site for NADPH. Sn-glycerol 3-phosphate is bound by residues K187, D240, S250, R251, and N252. K187 acts as the Proton acceptor in catalysis. R251 contributes to the NADPH binding site. NADPH is bound by residues V275 and E277.

The protein belongs to the NAD-dependent glycerol-3-phosphate dehydrogenase family.

It is found in the cytoplasm. The catalysed reaction is sn-glycerol 3-phosphate + NAD(+) = dihydroxyacetone phosphate + NADH + H(+). It catalyses the reaction sn-glycerol 3-phosphate + NADP(+) = dihydroxyacetone phosphate + NADPH + H(+). It functions in the pathway membrane lipid metabolism; glycerophospholipid metabolism. Functionally, catalyzes the reduction of the glycolytic intermediate dihydroxyacetone phosphate (DHAP) to sn-glycerol 3-phosphate (G3P), the key precursor for phospholipid synthesis. This Novosphingobium aromaticivorans (strain ATCC 700278 / DSM 12444 / CCUG 56034 / CIP 105152 / NBRC 16084 / F199) protein is Glycerol-3-phosphate dehydrogenase [NAD(P)+].